The primary structure comprises 87 residues: Small ribosomal subunit protein bS20 (87 aa).

Residues 1 to 21 (MANIKQQIKRNKTNEKRRLKN) are disordered. The segment covering 7–20 (QIKRNKTNEKRRLK) has biased composition (basic residues).

It belongs to the bacterial ribosomal protein bS20 family.

Functionally, binds directly to 16S ribosomal RNA. This chain is Small ribosomal subunit protein bS20, found in Phytoplasma mali (strain AT).